The sequence spans 238 residues: Ribonuclease 3 (238 aa).

An RNase III domain is found at 4 to 134 (PRQALLDAFG…LLGAIYLHHG (131 aa)). Glu44 is a binding site for Mg(2+). Residue Asp48 is part of the active site. Mg(2+) is bound by residues Asp120 and Glu123. The active site involves Glu123. In terms of domain architecture, DRBM spans 161–229 (DWKTSLQELT…ASAAWKALDV (69 aa)).

The protein belongs to the ribonuclease III family. Homodimer. Mg(2+) serves as cofactor.

The protein localises to the cytoplasm. It catalyses the reaction Endonucleolytic cleavage to 5'-phosphomonoester.. Functionally, digests double-stranded RNA. Involved in the processing of primary rRNA transcript to yield the immediate precursors to the large and small rRNAs (23S and 16S). Processes some mRNAs, and tRNAs when they are encoded in the rRNA operon. Processes pre-crRNA and tracrRNA of type II CRISPR loci if present in the organism. The polypeptide is Ribonuclease 3 (Mycobacterium leprae (strain TN)).